The chain runs to 212 residues: Response regulator SsrB (212 aa).

The segment at 1–138 (MKEYKILLVD…PTLNREAILA (138 aa)) is required for prevention of DNA binding in absence of phosphorylation and for full stimulation of activity by acidic pH. The Response regulatory domain maps to 5–121 (KILLVDDHEI…VLLAALQTVA (117 aa)). The residue at position 56 (Asp-56) is a 4-aspartylphosphate. One can recognise an HTH luxR-type domain in the interval 143 to 208 (DTTNHQLLTL…ELLNCARRMR (66 aa)). The segment at residues 167–186 (NHGISEKLHISIKTVETHRM) is a DNA-binding region (H-T-H motif). Cys-203 carries the post-translational modification S-nitrosocysteine.

In terms of assembly, homodimer; disulfide-linked; dimerizes upon DNA-binding. In terms of processing, ssrB phosphorylated on Asp-56 activates the expression of virulence genes whereas the unphosphorylated form controls biofilm formation. Independently of SsrA, can be phosphorylated by small inorganic phosphate donors (such as acetyl phosphate or phosphoramidate). Post-translationally, disulfide bond formation at Cys-203 is not required for dimerization. Cys-203 may serve as a redox sensor that is nitrosylated in presence of reactive nitrogen species (RNS) generated by the host, the modification modulates its DNA-binding activity. Cys-203 is relatively resistant to oxidation by hydrogen peroxide.

It localises to the cytoplasm. Member of the two-component regulatory system SsrA/SsrB (SpiR/SsrB) that is required for intracellular proliferation and systemic dissemination within the host. When inside acidic Salmonella-containing vesicles (SCV) within host cells the SsrA sensor kinase autophosphorylates and the phosphoryl group is transferred to the response regulator SsrB; phosphorylated SsrB activates the expression of genes encoding virulence proteins, including pathogenicity island 2 (SPI2) and other horizontally acquired genes, but also ancestral genes; it can stimulate gene expression both by recruiting RNA polymerase and by antagonizing the action of the transcriptional repressor hns (H-NS). Can also act independently of sensor kinase ssrA to support the dormant carrier state by directing the transcription of factors required for biofilm formation. DNA-binding is stimulated by acidic pH conditions, and binding promotes bending of DNA both upstream and downstream of binding sites. Binds a degenerate 18-basepair palindromic sequence with a 7-4-7 internal organization, and regulates gene expression from 86 operons. When phosphorylated, activates the transcription of the ABC transporter complex dalSTUV, which helps protect the organism from oxidative killing by host neutrophils. Binds the phoP promoter to stimulate expression in acidic pH conditions. Antagonizes hns to activate the transcription of ugtL. Following invasion of host cells, binds the hilD and hilA regulatory regions to repress their transcription and consequently to repress transcription of pathogenicity island 1 (SPI1) encoding genes involved in host cell invasion. Binds the promoters of the flagellar master regulators flhD and flhC to repress their expression and consequently to suppress flagellar motility and promote evasion of the host inflammasome during infection of host cells. Activates expression of sseI/srfH, sifA, sifB, sseJ and regulates its own expression. When unphosphorylated, relieves the hns-mediated repression of master biofilm regulator csgD by binding and bending the csgD regulatory region. May act as early as in the lumen of the host small intestine, to activate the expression of virulence proteins prior to invasion of host cells. This is Response regulator SsrB from Salmonella typhimurium (strain LT2 / SGSC1412 / ATCC 700720).